The chain runs to 196 residues: Putative lipopolysaccharide biosynthesis O-acetyl transferase WbbJ (196 aa).

Belongs to the transferase hexapeptide repeat family.

It participates in bacterial outer membrane biogenesis; lipopolysaccharide biosynthesis. In terms of biological role, putative O-acetyltransferase that transfers an O-acetyl group to the O antigen. In Escherichia coli (strain K12), this protein is Putative lipopolysaccharide biosynthesis O-acetyl transferase WbbJ (wbbJ).